The primary structure comprises 1167 residues: RNA-directed RNA polymerase (1167 aa).

A RdRp catalytic domain is found at 553-735 (LTYGILAEAT…KALASYTGLE (183 aa)).

This sequence belongs to the reoviridae RNA-directed RNA polymerase family. As to quaternary structure, interacts with VP3 (Potential). Interacts with VP2 (Potential). Interacts with NSP5; this interaction is probably necessary for the formation of functional virus factories.

It is found in the virion. The catalysed reaction is RNA(n) + a ribonucleoside 5'-triphosphate = RNA(n+1) + diphosphate. Its function is as follows. RNA-directed RNA polymerase that is involved in both transcription and genome replication. Together with VP3 capping enzyme, forms an enzyme complex positioned near the channels situated at each of the five-fold vertices of the core. Following infection, the outermost layer of the virus is lost, leaving a double-layered particle (DLP) made up of the core and VP6 shell. VP1 then catalyzes the transcription of fully conservative plus-strand genomic RNAs that are extruded through the DLP's channels into the cytoplasm where they function as mRNAs for translation of viral proteins. One copy of each of the viral (+)RNAs is also recruited during core assembly, together with newly synthesized polymerase complexes and VP2. The polymerase of these novo-formed particles catalyzes the synthesis of complementary minus-strands leading to dsDNA formation. To do so, the polymerase specifically recognizes conserved 3' sequence(s) in plus-strand RNA templates. Once dsRNA synthesis is complete, the polymerase switches to the transcriptional mode, thus providing secondary transcription. This chain is RNA-directed RNA polymerase, found in Rotavirus X (isolate RVX/Human/Bangladesh/NADRV-B219/2002/GXP[X]) (RV ADRV-N).